Consider the following 285-residue polypeptide: Protein FD (285 aa).

Basic residues predominate over residues 1–12 (MLSSAKHQRNHR). Disordered stretches follow at residues 1–59 (MLSS…QKRS), 79–107 (NRHS…NSIF), 115–134 (LNQE…NGDS), 198–236 (SSSF…ARKQ), and 257–285 (KRQQ…TAPF). Positions 13–25 (LSATNKNQTLTKV) are enriched in polar residues. Over residues 26-50 (SSISSSSPSSSSSSSSTSSSSPLPS) the composition is skewed to low complexity. Over residues 98–107 (HHNQNPNSIF) the composition is skewed to polar residues. The region spanning 214–277 (GNRRHKRMIK…AIQQPKKNTL (64 aa)) is the bZIP domain. Residues 216–235 (RRHKRMIKNRESAARSRARK) form a basic motif region. The leucine-zipper stretch occupies residues 242–263 (LELEVAHLQAENARLKRQQDQL). Over residues 272–285 (PKKNTLQRSSTAPF) the composition is skewed to polar residues. Position 282 is a phosphothreonine (threonine 282).

This sequence belongs to the bZIP family. Self-interacts. Interacts with FT and FDP/BZIP27. Interacts with GRF3 and GRF4, and in a calcium-independent manner, with CPK6 and CPK33. Phosphorylated at Thr-282 in a calcium-dependent manner by CPK6 and CPK33. Highly expressed in shoot apex.

The protein resides in the nucleus. Transcription factor required for the transition to flowering promoted by FT. This chain is Protein FD, found in Arabidopsis thaliana (Mouse-ear cress).